A 534-amino-acid polypeptide reads, in one-letter code: NAD(P)H-quinone oxidoreductase chain 4 1 (534 aa).

The next 14 membrane-spanning stretches (helical) occupy residues 6–26, 34–54, 87–107, 113–133, 136–156, 169–189, 209–229, 243–263, 277–297, 311–331, 332–352, 376–396, 418–438, and 464–484; these read IPWLTTAIAFPLLAALVIPLI, IRWYTLGVALTDFALLVTAFW, LSMPLIILATLITTLATLAAW, PKLFAGLILVMLSAQIGVFAV, LLLFFIMWELELVPVYLLISI, FILYTALGSVFILASTLALAF, ALELLAYAGFLIGFGVKLPIF, SAPVSMILAGVLLKMGGYGLI, FAPLLIVLGIVNIVYGALTAF, ISHMGFVLVGIASFTDLGMNG, AVLQMLSHGFIAAALFFLSGV, FAMFTAAAMASLALPGMSGFV, IAIFLTAVGVILTPIYLLSML, and IFVAVCLLAPIIAIGLYPKLA.

The protein belongs to the complex I subunit 4 family.

The protein localises to the cellular thylakoid membrane. It carries out the reaction a plastoquinone + NADH + (n+1) H(+)(in) = a plastoquinol + NAD(+) + n H(+)(out). It catalyses the reaction a plastoquinone + NADPH + (n+1) H(+)(in) = a plastoquinol + NADP(+) + n H(+)(out). Its function is as follows. NDH-1 shuttles electrons from NAD(P)H, via FMN and iron-sulfur (Fe-S) centers, to quinones in the respiratory chain. The immediate electron acceptor for the enzyme in this species is believed to be plastoquinone. Couples the redox reaction to proton translocation (for every two electrons transferred, four hydrogen ions are translocated across the cytoplasmic membrane), and thus conserves the redox energy in a proton gradient. The chain is NAD(P)H-quinone oxidoreductase chain 4 1 from Picosynechococcus sp. (strain ATCC 27264 / PCC 7002 / PR-6) (Agmenellum quadruplicatum).